The sequence spans 189 residues: Pyridoxal 5'-phosphate synthase subunit PdxT (189 aa).

Residue 47 to 49 (GES) coordinates L-glutamine. Cys79 (nucleophile) is an active-site residue. Residues Arg106 and 135-136 (IR) contribute to the L-glutamine site. Catalysis depends on charge relay system residues His171 and Glu173.

Belongs to the glutaminase PdxT/SNO family. In the presence of PdxS, forms a dodecamer of heterodimers. Only shows activity in the heterodimer.

The enzyme catalyses aldehydo-D-ribose 5-phosphate + D-glyceraldehyde 3-phosphate + L-glutamine = pyridoxal 5'-phosphate + L-glutamate + phosphate + 3 H2O + H(+). The catalysed reaction is L-glutamine + H2O = L-glutamate + NH4(+). The protein operates within cofactor biosynthesis; pyridoxal 5'-phosphate biosynthesis. In terms of biological role, catalyzes the hydrolysis of glutamine to glutamate and ammonia as part of the biosynthesis of pyridoxal 5'-phosphate. The resulting ammonia molecule is channeled to the active site of PdxS. The sequence is that of Pyridoxal 5'-phosphate synthase subunit PdxT from Thermoanaerobacter pseudethanolicus (strain ATCC 33223 / 39E) (Clostridium thermohydrosulfuricum).